Reading from the N-terminus, the 248-residue chain is Probable 2-oxo-3-(5-oxofuran-2-ylidene)propanoate lactonase (248 aa).

Catalysis depends on residues cysteine 123, aspartate 180, and histidine 212.

Belongs to the dienelactone hydrolase family.

The enzyme catalyses 2-oxo-3-(5-oxofuran-2-ylidene)propanoate + H2O = 3-maleylpyruvate + H(+). Functionally, involved in the 5-nitroanthranilic acid (5NAA) degradation. Catalyzes the hydrolysis of the lactone to produce maleylpyruvate biodegradation of 5-nitroanthranilate. This Bradyrhizobium sp protein is Probable 2-oxo-3-(5-oxofuran-2-ylidene)propanoate lactonase (naaC).